A 333-amino-acid chain; its full sequence is Cytochrome f (333 aa).

An N-terminal signal peptide occupies residues 1 to 44; the sequence is MRNACTRARLTRTARAMVKTLFIAIASVTFFFTSDLALPQSAAA. Heme is bound by residues tyrosine 45, cysteine 66, cysteine 69, and histidine 70. Residues 299–318 form a helical membrane-spanning segment; sequence VGWLIAFVALVMLAQVMLVL.

The protein belongs to the cytochrome f family. The 4 large subunits of the cytochrome b6-f complex are cytochrome b6, subunit IV (17 kDa polypeptide, PetD), cytochrome f and the Rieske protein, while the 4 small subunits are PetG, PetL, PetM and PetN. The complex functions as a dimer. The cofactor is heme.

It is found in the cellular thylakoid membrane. Its function is as follows. Component of the cytochrome b6-f complex, which mediates electron transfer between photosystem II (PSII) and photosystem I (PSI), cyclic electron flow around PSI, and state transitions. This is Cytochrome f from Nostoc sp. (strain PCC 7120 / SAG 25.82 / UTEX 2576).